We begin with the raw amino-acid sequence, 325 residues long: Leucine-rich repeat protein FLOR 1 (325 aa).

LRR repeat units follow at residues 65 to 88 (NRRVTGLSVTSGEVSGQISYQIGD), 89 to 114 (LVDLRTLDFSYLPHLTGNIPRTITKL), 115 to 140 (KNLNTLYLKHTSLSGPIPDYISELKS), 142 to 162 (TFLDLSFNQFTGPIPGSLSQM), 163 to 185 (PKLEAIQINDNKLTGSIPNSFGS), 187 to 211 (VGNVPNLYLSNNKLSGKIPESLSKY), 213 to 233 (FNAVDLSGNGFEGDAFMFFGR), 234 to 256 (NKTTVRVDLSRNMFNFDLVKVKF), 257 to 280 (ARSIVSLDLSQNHIYGKIPPALTK), and 281 to 305 (LHLEHFNVSDNHLCGKIPSGGLLQT).

It belongs to the polygalacturonase-inhibiting protein family. As to quaternary structure, interacts with MADS domain transcription factors during flower development. Component of a complex made of FLOR1, VSP1 and AGAMOUS (AG). Binds directly with AG. In terms of tissue distribution, confined to flowers and inflorescences (e.g. inflorescence meristems, floral meristems, stamens and carpels).

The protein localises to the cytoplasm. The protein resides in the nucleus. It localises to the perinuclear region. It is found in the cell membrane. In terms of biological role, promotes flowering transition in long days (LD). This is Leucine-rich repeat protein FLOR 1 from Arabidopsis thaliana (Mouse-ear cress).